The chain runs to 177 residues: Protein TERMINAL FLOWER 1 (177 aa).

Belongs to the phosphatidylethanolamine-binding protein family. Expressed below the apical dome of inflorescence and coflorescence meristems, and in inflorescence stem.

The protein localises to the cytoplasm. Controls inflorescence meristem identity and is required for maintenance of an indeterminate inflorescence. Prevents the expression of 'APETALA1' and 'LEAFY'. Also plays a role in the regulation of the time of flowering in the long-day flowering pathway. May form complexes with phosphorylated ligands by interfering with kinases and their effectors. This chain is Protein TERMINAL FLOWER 1 (TFL1), found in Arabidopsis thaliana (Mouse-ear cress).